We begin with the raw amino-acid sequence, 142 residues long: Hemoglobin subunit alpha-A (142 aa).

In terms of domain architecture, Globin spans 2–142 (VLSAADKTNV…VGTVLTAKYR (141 aa)). Histidine 59 serves as a coordination point for O2. Position 88 (histidine 88) interacts with heme b.

The protein belongs to the globin family. As to quaternary structure, heterotetramer of two alpha chains and two beta chains. Red blood cells.

Involved in oxygen transport from the lung to the various peripheral tissues. The protein is Hemoglobin subunit alpha-A (HBAA) of Coturnix japonica (Japanese quail).